The primary structure comprises 308 residues: MSGKPLHEKTKEWARRHVRLLEEVGVTPKLAVLLLNDDPVELETQRRYVSLKARDVREVGGEVEIYELVDVPPERRSKEALYLIERLNRRDDVTGILIQKPVPPFVDEDLLFQRLSPEKDVDALTPENKKRLLALFDLDRDLLPCTPAGILELLQMYGVEVKGRDVTVVGKGELVGKPLAVMLMQLDASVSVLHALTRDKLRYVKEADIVISAVGRPPELYRDNPWRLTGDMVKEGAVVVGVGGKVDPATGKWYFDVDEKSVAEKASYLTPNLGGVGLATRARLLKNLIRASYNVARATAAPRLLKAF.

Position 170 to 172 (Gly-170 to Gly-172) interacts with NADP(+).

The protein belongs to the tetrahydrofolate dehydrogenase/cyclohydrolase family. In terms of assembly, homodimer.

The catalysed reaction is (6R)-5,10-methylene-5,6,7,8-tetrahydrofolate + NADP(+) = (6R)-5,10-methenyltetrahydrofolate + NADPH. It catalyses the reaction (6R)-5,10-methenyltetrahydrofolate + H2O = (6R)-10-formyltetrahydrofolate + H(+). The protein operates within one-carbon metabolism; tetrahydrofolate interconversion. Catalyzes the oxidation of 5,10-methylenetetrahydrofolate to 5,10-methenyltetrahydrofolate and then the hydrolysis of 5,10-methenyltetrahydrofolate to 10-formyltetrahydrofolate. The polypeptide is Bifunctional protein FolD (Pyrobaculum calidifontis (strain DSM 21063 / JCM 11548 / VA1)).